The sequence spans 93 residues: Co-chaperonin GroES (93 aa).

This sequence belongs to the GroES chaperonin family. Heptamer of 7 subunits arranged in a ring. Interacts with the chaperonin GroEL.

The protein localises to the cytoplasm. Together with the chaperonin GroEL, plays an essential role in assisting protein folding. The GroEL-GroES system forms a nano-cage that allows encapsulation of the non-native substrate proteins and provides a physical environment optimized to promote and accelerate protein folding. GroES binds to the apical surface of the GroEL ring, thereby capping the opening of the GroEL channel. This is Co-chaperonin GroES from Geobacillus kaustophilus (strain HTA426).